The following is a 405-amino-acid chain: Alpha-1-antiproteinase S (405 aa).

The first 24 residues, M1 to A24, serve as a signal peptide directing secretion. N-linked (GlcNAc...) asparagine glycans are attached at residues N57, N94, N157, and N258. Positions G360–K379 are RCL.

The protein belongs to the serpin family.

It is found in the secreted. Inhibits elastase, chymotrypsin, cathepsin G, plasmin, and trypsin. The chain is Alpha-1-antiproteinase S from Cavia porcellus (Guinea pig).